The sequence spans 129 residues: Antimicrobial peptide NK-lysin (129 aa).

The first 6 residues, 1–6 (PGLAFS), serve as a signal peptide directing secretion. A propeptide spanning residues 7–46 (GLTPEHSALARAHPCDGEQFCQNLAPEDPQGDQLLQREEL) is cleaved from the precursor. Positions 46–126 (LGLICESCRK…VDIKICKEKT (81 aa)) constitute a Saposin B-type domain. Cystine bridges form between cysteine 50–cysteine 122, cysteine 53–cysteine 116, and cysteine 81–cysteine 91. A propeptide spanning residues 125–129 (KTGLI) is cleaved from the precursor.

In terms of tissue distribution, cytotoxic T and NK cells.

The protein localises to the secreted. Functionally, may be an effector molecule of cytotoxic activity. High activity against E.coli and B.megaterium, moderate against A.calcoaceticus and S.pyogenes. No activity against P.aeruginosa, S.aureus and Salmonella. Has some antifungal activity against C.albicans. This chain is Antimicrobial peptide NK-lysin (NKL), found in Sus scrofa (Pig).